Consider the following 394-residue polypeptide: Large ribosomal subunit protein mL44 (394 aa).

The N-terminal 21 residues, 1–21, are a transit peptide targeting the mitochondrion; the sequence is MFRHVAQNLGSRNTSIQSYRL.

The protein belongs to the ribonuclease III family. Mitochondrion-specific ribosomal protein mL44 subfamily. Component of the mitochondrial large ribosomal subunit (mt-LSU).

The protein localises to the mitochondrion. Functionally, component of the mitochondrial ribosome. May have a function in the assembly/stability of nascent mitochondrial polypeptides exiting the ribosome. The polypeptide is Large ribosomal subunit protein mL44 (Caenorhabditis elegans).